We begin with the raw amino-acid sequence, 320 residues long: Reticulocalbin-2 (320 aa).

The signal sequence occupies residues 1 to 25 (MRLGPRPAALGLLLPLLLYAAVAGA). 2 EF-hand domains span residues 64–99 (EQQRRLQSIIKKIDSDSDGFLTENELSQWIQMSFKH) and 100–135 (YAMQEAKQQFVEYDKNSDGAVTWDEYNIQMYDRVID). Asp-77, Asp-79, Asp-81, Glu-88, Asp-113, Asn-115, Asp-117, and Glu-124 together coordinate Ca(2+). Thr-140 is modified (phosphothreonine). 4 consecutive EF-hand domains span residues 150-185 (FRQLHLKDKKRFEKANQDSGPGLSLEEFIAFEHPEE), 189-224 (MTEFVIQEALEEHDKNGDGFVSLEEFLGDYRRDPTA), 230-265 (WILVEKDRFVNDYDKDNDGRLDPQELLSWVVPNNQG), and 266-301 (IAQEEALHLIDEMDLNSDKKLSEEEILENQDLFLTS). Ca(2+) is bound by residues Asp-167, Glu-176, Asp-202, Asn-204, Asp-206, Glu-213, Asp-243, Asp-245, Asp-247, Arg-249, Glu-254, Asp-279, Asn-281, Asp-283, Lys-285, and Glu-290. The Prevents secretion from ER signature appears at 317–320 (HDEL).

Belongs to the CREC family.

It is found in the endoplasmic reticulum lumen. Its function is as follows. Not known. Binds calcium. The sequence is that of Reticulocalbin-2 (Rcn2) from Mus musculus (Mouse).